The following is a 750-amino-acid chain: uncharacterized protein (750 aa).

5 consecutive transmembrane segments (helical) span residues phenylalanine 2 to isoleucine 22, serine 33 to isoleucine 53, leucine 79 to leucine 99, leucine 116 to leucine 136, and isoleucine 143 to alanine 163. Disordered stretches follow at residues aspartate 385–glutamate 461 and asparagine 571–alanine 651. Residues glutamate 398–aspartate 411 are compositionally biased toward basic and acidic residues. A compositionally biased stretch (polar residues) spans threonine 412 to aspartate 424. The span at glutamine 425–threonine 436 shows a compositional bias: low complexity. Positions alanine 437 to asparagine 451 are enriched in polar residues. The segment covering asparagine 452–glutamate 461 has biased composition (basic and acidic residues). Polar residues predominate over residues aspartate 618–threonine 629. Residues alanine 724 to phenylalanine 744 traverse the membrane as a helical segment.

To M.pneumoniae MPN_335.

The protein localises to the cell membrane. This is an uncharacterized protein from Mycoplasma pneumoniae (strain ATCC 29342 / M129 / Subtype 1) (Mycoplasmoides pneumoniae).